A 195-amino-acid polypeptide reads, in one-letter code: Transcriptional regulator GfcR (195 aa).

It belongs to the purine/pyrimidine phosphoribosyltransferase family. GfcR subfamily.

The sequence is that of Transcriptional regulator GfcR from Archaeoglobus fulgidus (strain ATCC 49558 / DSM 4304 / JCM 9628 / NBRC 100126 / VC-16).